A 746-amino-acid chain; its full sequence is Teichoic acid poly(glycerol phosphate) polymerase (746 aa).

CDP-glycerol is bound by residues 473-477, arginine 540, 573-574, 610-612, 652-653, and aspartate 657; these read WHGTP, PT, RMH, and SS.

It belongs to the CDP-glycerol glycerophosphotransferase family.

It is found in the cell membrane. It carries out the reaction 4-O-[(2R)-glycerylphospho]-N-acetyl-beta-D-mannosaminyl-(1-&gt;4)-N-acetyl-alpha-D-glucosaminyl di-trans,octa-cis-undecaprenyl diphosphate + n CDP-glycerol = 4-O-{[(2R)-1-glycerylphospho](n)-(2R)-1-glycerylphospho}-N-acetyl-beta-D-mannosaminyl-(1-&gt;4)-N-acetyl-alpha-D-glucosaminyl undecaprenyl diphosphate + n CMP + n H(+). Its pathway is cell wall biogenesis; poly(glycerol phosphate) teichoic acid biosynthesis. Its function is as follows. Responsible for the polymerization of the main chain of the major teichoic acid by sequential transfer of glycerol phosphate units from CDP-glycerol to the disaccharide linkage unit. Synthesizes polymers of approximately 35 glycerol phosphate units in length. The polypeptide is Teichoic acid poly(glycerol phosphate) polymerase (tagF) (Bacillus subtilis (strain 168)).